A 332-amino-acid chain; its full sequence is Casein kinase II subunit alpha (332 aa).

The 286-residue stretch at 34-319 (YEVVRKVGRG…ALEAMTHPYF (286 aa)) folds into the Protein kinase domain. ATP contacts are provided by residues 40–48 (VGRGKYSEV) and Lys63. Catalysis depends on Asp151, which acts as the Proton acceptor.

Belongs to the protein kinase superfamily. Ser/Thr protein kinase family. CK2 subfamily. As to quaternary structure, tetramer of two alpha and two beta chains (possible).

The enzyme catalyses L-seryl-[protein] + ATP = O-phospho-L-seryl-[protein] + ADP + H(+). It carries out the reaction L-threonyl-[protein] + ATP = O-phospho-L-threonyl-[protein] + ADP + H(+). Functionally, casein kinases are operationally defined by their preferential utilization of acidic proteins such as caseins as substrates. The alpha chain contains the catalytic site. This chain is Casein kinase II subunit alpha (ACK2), found in Zea mays (Maize).